The sequence spans 328 residues: Carbonic anhydrase-related protein 10 (328 aa).

The 271-residue stretch at 31 to 301 folds into the Alpha-carbonic anhydrase domain; sequence GWWAYKEVVQ…LNNRCIRTNI (271 aa).

It belongs to the alpha-carbonic anhydrase family.

Does not have a catalytic activity. In Macaca fascicularis (Crab-eating macaque), this protein is Carbonic anhydrase-related protein 10 (CA10).